We begin with the raw amino-acid sequence, 331 residues long: Glucokinase (331 aa).

An ATP-binding site is contributed by 13–18 (GDIGGT).

Belongs to the bacterial glucokinase family.

It localises to the cytoplasm. It catalyses the reaction D-glucose + ATP = D-glucose 6-phosphate + ADP + H(+). This chain is Glucokinase, found in Caulobacter vibrioides (strain ATCC 19089 / CIP 103742 / CB 15) (Caulobacter crescentus).